Consider the following 377-residue polypeptide: 3-dehydroquinate synthase (377 aa).

NAD(+)-binding positions include 115 to 119 (GVIGD), 139 to 140 (TS), K152, and K161. Zn(2+) is bound by residues E194, H256, and H275.

This sequence belongs to the sugar phosphate cyclases superfamily. Dehydroquinate synthase family. NAD(+) is required as a cofactor. Co(2+) serves as cofactor. Requires Zn(2+) as cofactor.

Its subcellular location is the cytoplasm. It carries out the reaction 7-phospho-2-dehydro-3-deoxy-D-arabino-heptonate = 3-dehydroquinate + phosphate. The protein operates within metabolic intermediate biosynthesis; chorismate biosynthesis; chorismate from D-erythrose 4-phosphate and phosphoenolpyruvate: step 2/7. Functionally, catalyzes the conversion of 3-deoxy-D-arabino-heptulosonate 7-phosphate (DAHP) to dehydroquinate (DHQ). The protein is 3-dehydroquinate synthase of Rhizobium meliloti (strain 1021) (Ensifer meliloti).